A 635-amino-acid chain; its full sequence is Cationic amino acid transporter 2, vacuolar (635 aa).

At 1–48 the chain is on the cytoplasmic side; it reads MGFLVDTQKEGGGHSWGYVRSLVRRKQVDSANGQSHGHQLARALTVPH. Residues 49 to 69 form a helical membrane-spanning segment; the sequence is LVAIGVGATIGAGVYILVGTV. Residues 70–76 lie on the Vacuolar side of the membrane; sequence AREHSGP. Residues 77-97 form a helical membrane-spanning segment; it reads SLALSFLIAGIAAGLSAFCYA. Over 98-108 the chain is Cytoplasmic; the sequence is ELSSRCPSAGS. A helical membrane pass occupies residues 109 to 131; the sequence is AYHYSYICVGEGVAWIIGWALIL. The Vacuolar portion of the chain corresponds to 132-171; sequence EYTIGGSAVARGISPNLALIFGGEDGLPAILARHQIPGLD. Residues 172–192 form a helical membrane-spanning segment; that stretch reads IVVDPCAAILVFVVTGLLCMG. The Cytoplasmic portion of the chain corresponds to 193 to 200; the sequence is IKESTFAQ. The helical transmembrane segment at 201 to 221 threads the bilayer; the sequence is GIVTAVNVCVLLFVIVAGSYL. Topologically, residues 222 to 235 are vacuolar; sequence GFKTGWPGYELPTG. A helical transmembrane segment spans residues 236-256; sequence FFPFGVDGMFAGSATVFFAFI. Residues 257–280 lie on the Cytoplasmic side of the membrane; that stretch reads GFDSVASTAEEVRNPQRDLPIGIG. Residues 281–301 form a helical membrane-spanning segment; the sequence is LALLLCCSLYMMVSIVIVGLI. Residues 302–324 are Vacuolar-facing; sequence PYYAMDPDTPISSAFASHDMQWA. A helical transmembrane segment spans residues 325 to 345; the sequence is VYLITLGAVMALCSALMGALL. Residues 346–376 lie on the Cytoplasmic side of the membrane; that stretch reads PQPRILMAMARDGLLPSIFSDINKRTQVPVK. Residues 377-397 traverse the membrane as a helical segment; it reads ATVATGLCAATLAFFMDVSQL. Position 398 (Ala-398) is a topological domain, vacuolar. Residues 399–419 traverse the membrane as a helical segment; sequence GMVSVGTLLAFTMVAISVLIL. Over 420–493 the chain is Cytoplasmic; the sequence is RYVPPDEQPL…CLVLSEETRR (74 aa). Residues 494 to 514 form a helical membrane-spanning segment; that stretch reads IVAGWSIMFTCVGAFLLSYAA. At 515–524 the chain is on the vacuolar side; sequence SSLSFPGLIR. A helical transmembrane segment spans residues 525–545; the sequence is YPLCGVGGCLLLAGLIALSSI. Topologically, residues 546 to 560 are cytoplasmic; sequence DQDDARHTFGHSGGY. The helical transmembrane segment at 561–581 threads the bilayer; the sequence is MCPFVPLLPIICILINMYLLV. The Vacuolar segment spans residues 582-585; that stretch reads NLGS. The chain crosses the membrane as a helical span at residues 586 to 606; it reads ATWARVSVWLLIGVIVYVFYG. Residues 607–635 are Cytoplasmic-facing; it reads RKNSSLANAVYVTTAHAEEIYREHEGSLA.

This sequence belongs to the amino acid-polyamine-organocation (APC) superfamily. Cationic amino acid transporter (CAT) (TC 2.A.3.3) family. In terms of tissue distribution, expressed in roots, stems, flowers, leaves, and siliques.

It is found in the vacuole membrane. Functionally, permease involved in the transport of the cationic amino acids. The chain is Cationic amino acid transporter 2, vacuolar (CAT2) from Arabidopsis thaliana (Mouse-ear cress).